Reading from the N-terminus, the 145-residue chain is I-leader protein (145 aa).

The protein belongs to the adenoviridae leader protein family.

It is found in the host cytoplasm. The protein resides in the host perinuclear region. This chain is I-leader protein, found in Human adenovirus C serotype 5 (HAdV-5).